The primary structure comprises 74 residues: Putative membrane protein insertion efficiency factor (74 aa).

Belongs to the UPF0161 family.

It is found in the cell membrane. Functionally, could be involved in insertion of integral membrane proteins into the membrane. The chain is Putative membrane protein insertion efficiency factor from Anoxybacillus flavithermus (strain DSM 21510 / WK1).